A 234-amino-acid polypeptide reads, in one-letter code: Large ribosomal subunit protein uL1 (234 aa).

Belongs to the universal ribosomal protein uL1 family. Part of the 50S ribosomal subunit.

Binds directly to 23S rRNA. The L1 stalk is quite mobile in the ribosome, and is involved in E site tRNA release. In terms of biological role, protein L1 is also a translational repressor protein, it controls the translation of the L11 operon by binding to its mRNA. This Yersinia enterocolitica serotype O:8 / biotype 1B (strain NCTC 13174 / 8081) protein is Large ribosomal subunit protein uL1.